A 628-amino-acid chain; its full sequence is Alpha-L-arabinofuranosidase A (628 aa).

The first 25 residues, 1-25 (MVAFSALSGVSALSLLLCLVQHAHG), serve as a signal peptide directing secretion. 8 N-linked (GlcNAc...) asparagine glycosylation sites follow: Asn36, Asn51, Asn74, Asn152, Asn171, Asn260, Asn359, and Asn493.

This sequence belongs to the glycosyl hydrolase 51 family.

The protein localises to the secreted. The enzyme catalyses Hydrolysis of terminal non-reducing alpha-L-arabinofuranoside residues in alpha-L-arabinosides.. The protein operates within glycan metabolism; L-arabinan degradation. Functionally, alpha-L-arabinofuranosidase involved in the degradation of arabinoxylan, a major component of plant hemicellulose. Acts only on small linear 1,5-alpha-linked L-arabinofuranosyl oligosaccharides. The polypeptide is Alpha-L-arabinofuranosidase A (abfA) (Aspergillus kawachii (strain NBRC 4308) (White koji mold)).